The sequence spans 345 residues: Microtubule-associated protein Jupiter (345 aa).

Over residues 1–14 (MISNFDCTDNQASS) the composition is skewed to polar residues. A disordered region spans residues 1 to 34 (MISNFDCTDNQASSKVLRPPGGGSSDIFGSEMPQ). Position 24 is a phosphoserine (S24). T35 is subject to Phosphothreonine. Basic and acidic residues predominate over residues 78–87 (QKTVDSHNRL). Positions 78-100 (QKTVDSHNRLFGEPTRPITPGKN) are disordered. T92 and T96 each carry phosphothreonine. Residues S105, S134, and S145 each carry the phosphoserine modification. 2 disordered regions span residues 127 to 241 (HYNG…QPHS) and 300 to 345 (EGNP…SGLW). Residues 132–145 (SGSVSSASSSVSSS) are compositionally biased toward low complexity. A compositionally biased stretch (polar residues) spans 146-164 (TENLKMNSGSRSVFRNMST). Positions 177–191 (LCPPSPVRIEPPTPP) are enriched in pro residues. 2 stretches are compositionally biased toward polar residues: residues 212–226 (DNSTYTKSDQVNEAC) and 315–326 (DYNQRQESSNAG).

It belongs to the MAP Jupiter family.

It localises to the nucleus. The protein localises to the cytoplasm. It is found in the cytoskeleton. Its subcellular location is the spindle. Functionally, binds to all microtubule populations. In Drosophila erecta (Fruit fly), this protein is Microtubule-associated protein Jupiter.